Reading from the N-terminus, the 523-residue chain is tRNA-2-methylthio-N(6)-dimethylallyladenosine synthase (523 aa).

A disordered region spans residues Met1–Leu26. Residues Glu8–Ser17 show a composition bias toward polar residues. The MTTase N-terminal domain maps to Arg80–Met198. Cys89, Cys125, Cys159, Cys235, Cys239, and Cys242 together coordinate [4Fe-4S] cluster. Residues Arg221–Lys451 form the Radical SAM core domain. The region spanning Lys454–Asn517 is the TRAM domain.

Belongs to the methylthiotransferase family. MiaB subfamily. In terms of assembly, monomer. [4Fe-4S] cluster serves as cofactor.

Its subcellular location is the cytoplasm. The catalysed reaction is N(6)-dimethylallyladenosine(37) in tRNA + (sulfur carrier)-SH + AH2 + 2 S-adenosyl-L-methionine = 2-methylsulfanyl-N(6)-dimethylallyladenosine(37) in tRNA + (sulfur carrier)-H + 5'-deoxyadenosine + L-methionine + A + S-adenosyl-L-homocysteine + 2 H(+). Catalyzes the methylthiolation of N6-(dimethylallyl)adenosine (i(6)A), leading to the formation of 2-methylthio-N6-(dimethylallyl)adenosine (ms(2)i(6)A) at position 37 in tRNAs that read codons beginning with uridine. This Geobacillus thermodenitrificans (strain NG80-2) protein is tRNA-2-methylthio-N(6)-dimethylallyladenosine synthase.